Here is a 137-residue protein sequence, read N- to C-terminus: MAEALYYGGRQRQDQPRSTQLVKATTAVVAGGSLLILAGLVLAATVIGLTTITPLFVIFSPVLVPAVITVALLGLGFLASGGFGVAAITVLTWIYRYVTGKHPPGANQLDTARHKLMSKAREIKDYGQQQTSGAQAS.

Residue Ala2 is modified to N-acetylalanine; alternate. A run of 2 helical transmembrane segments spans residues 27 to 47 (AVVA…ATVI) and 55 to 75 (LFVI…LLGL).

The protein belongs to the oleosin family. As to expression, expressed in seeds (at protein level).

Its subcellular location is the lipid droplet. It is found in the membrane. Functionally, may have a structural role to stabilize the lipid body during desiccation of the seed by preventing coalescence of the oil. Probably interacts with both lipid and phospholipid moieties of lipid bodies. May also provide recognition signals for specific lipase anchorage in lipolysis during seedling growth. This is Oleosin Ara h 11.0102 from Arachis hypogaea (Peanut).